We begin with the raw amino-acid sequence, 163 residues long: Cytochrome c-type biogenesis protein CcmE (163 aa).

Residues M1–R7 lie on the Cytoplasmic side of the membrane. A helical; Signal-anchor for type II membrane protein membrane pass occupies residues L8–A28. Residues M29–P163 are Periplasmic-facing. 2 residues coordinate heme: H122 and Y126. Positions A134–P163 are disordered.

It belongs to the CcmE/CycJ family.

It is found in the cell inner membrane. Functionally, heme chaperone required for the biogenesis of c-type cytochromes. Transiently binds heme delivered by CcmC and transfers the heme to apo-cytochromes in a process facilitated by CcmF and CcmH. The sequence is that of Cytochrome c-type biogenesis protein CcmE from Methylobacterium sp. (strain 4-46).